The sequence spans 392 residues: MKRESSTQLRAGFTTGTCAAAAAKGAALMLRDQCLCDQVTLRLPTGISATFRLEGQEFSSSSASCFVVKDAGDDPDITNGAELHARVTVPPPLPLAQGDMVEITGGTGIGRATKPGLAVAPGEWAINPVPRRMIQEAVGEVFADRRVLVQISIPDGELRAQKTLNARLGILGGLSILGTTGIVRPISAKAWTDTIDTALDVARACGCATVVFSTGRTSELAAQEWLKVRGARFDFGDQESGNADREPGTMYLEPLPEEAFVMMGDHVAHALRSARERGFHQPVIACQYAKLVKIACGYENTHAAASDMDLARLRAWAVEAELPSRVVETIASANTAREIAVSTGFDPALLTLTARKALQASQGHATGAHPLFVVADYGGRIVFHSLPAENNA.

This sequence belongs to the CbiD family.

The catalysed reaction is Co-precorrin-5B + S-adenosyl-L-methionine = Co-precorrin-6A + S-adenosyl-L-homocysteine. Its pathway is cofactor biosynthesis; adenosylcobalamin biosynthesis; cob(II)yrinate a,c-diamide from sirohydrochlorin (anaerobic route): step 6/10. Catalyzes the methylation of C-1 in cobalt-precorrin-5B to form cobalt-precorrin-6A. This chain is Cobalt-precorrin-5B C(1)-methyltransferase, found in Pelobacter propionicus (strain DSM 2379 / NBRC 103807 / OttBd1).